A 214-amino-acid polypeptide reads, in one-letter code: Imidazole glycerol phosphate synthase subunit HisH (214 aa).

The Glutamine amidotransferase type-1 domain maps to 3 to 211 (TIAVIDYDMG…VSKVIPKNLA (209 aa)). Cys-81 (nucleophile) is an active-site residue. Active-site residues include His-186 and Glu-188.

In terms of assembly, heterodimer of HisH and HisF.

It localises to the cytoplasm. The enzyme catalyses 5-[(5-phospho-1-deoxy-D-ribulos-1-ylimino)methylamino]-1-(5-phospho-beta-D-ribosyl)imidazole-4-carboxamide + L-glutamine = D-erythro-1-(imidazol-4-yl)glycerol 3-phosphate + 5-amino-1-(5-phospho-beta-D-ribosyl)imidazole-4-carboxamide + L-glutamate + H(+). It carries out the reaction L-glutamine + H2O = L-glutamate + NH4(+). The protein operates within amino-acid biosynthesis; L-histidine biosynthesis; L-histidine from 5-phospho-alpha-D-ribose 1-diphosphate: step 5/9. Functionally, IGPS catalyzes the conversion of PRFAR and glutamine to IGP, AICAR and glutamate. The HisH subunit catalyzes the hydrolysis of glutamine to glutamate and ammonia as part of the synthesis of IGP and AICAR. The resulting ammonia molecule is channeled to the active site of HisF. The polypeptide is Imidazole glycerol phosphate synthase subunit HisH (Trichodesmium erythraeum (strain IMS101)).